The primary structure comprises 911 residues: Androgen receptor (911 aa).

The segment at 1–549 (MEVQLGLGRV…PIDYYFPPQK (549 aa)) is modulating. Positions 1–578 (MEVQLGLGRV…GSCKVFFKRA (578 aa)) are interaction with ZNF318. 2 disordered regions span residues 35–164 (QNPG…LSLL) and 192–225 (QQQQ…YLGG). A compositionally biased stretch (low complexity) spans 44-88 (AASAAPPGASLLLQQQQQQQQQQQQQQQQQQQQQQETSPRQQQQQ). Serine 81 carries the post-translational modification Phosphoserine; by CDK9. Serine 93 carries the phosphoserine modification. Residues 192-214 (QQQQQEAVSEGSSSGRAREASGA) show a composition bias toward low complexity. Positions 215-225 (PTSSKDNYLGG) are enriched in polar residues. A Phosphotyrosine; by CSK modification is found at tyrosine 222. Phosphoserine is present on serine 255. Tyrosine 266 carries the phosphotyrosine; by CSK and TNK2 modification. Residues tyrosine 306, tyrosine 345, tyrosine 356, and tyrosine 361 each carry the phosphotyrosine; by CSK modification. Tyrosine 362 carries the post-translational modification Phosphotyrosine; by CSK and TNK2. Residue lysine 385 forms a Glycyl lysine isopeptide (Lys-Gly) (interchain with G-Cter in SUMO) linkage. Tyrosine 392 carries the post-translational modification Phosphotyrosine; by CSK. Lysine 512 is covalently cross-linked (Glycyl lysine isopeptide (Lys-Gly) (interchain with G-Cter in SUMO)). Phosphotyrosine; by CSK is present on residues tyrosine 526 and tyrosine 543. An interaction with LPXN region spans residues 543–910 (YYFPPQKTCL…GKVKPIYFHT (368 aa)). NR C4-type zinc fingers lie at residues 551–571 (CLIC…CGSC) and 587–611 (CASR…LRKC). Residues 551–623 (CLICGDEASG…AGMTLGARKL (73 aa)) constitute a DNA-binding region (nuclear receptor). The interaction with HIPK3 stretch occupies residues 563-653 (YGALTCGSCK…TEETTQKLTV (91 aa)). The interval 583 to 910 (QKYLCASRND…GKVKPIYFHT (328 aa)) is interaction with CCAR1. The interval 616–910 (MTLGARKLKK…GKVKPIYFHT (295 aa)) is interaction with KAT7. Serine 642 bears the Phosphoserine; by STK4/MST1 mark. In terms of domain architecture, NR LBD spans 660–891 (ECQPIFLNVL…DFPEMMAEII (232 aa)). Positions 697 and 744 each coordinate 17beta-hydroxy-5alpha-androstan-3-one. Residues lysine 837 and lysine 839 each participate in a glycyl lysine isopeptide (Lys-Gly) (interchain with G-Cter in ubiquitin) cross-link. A 17beta-hydroxy-5alpha-androstan-3-one-binding site is contributed by threonine 869. Phosphotyrosine; by CSK is present on tyrosine 907.

It belongs to the nuclear hormone receptor family. NR3 subfamily. In terms of assembly, binds DNA as a homodimer. Part of a ternary complex containing AR, EFCAB6/DJBP and PARK7. Interacts with HIPK3 and NR0B2 in the presence of androgen. The ligand binding domain interacts with KAT7/HBO1 in the presence of dihydrotestosterone. Interacts with EFCAB6/DJBP, PQBP1, RANBP9, RBAK, SPDEF, SRA1, TGFB1I1 and RREB1. Interacts with ZMIZ1/ZIMP10 and ZMIZ2/ZMIP7 which both enhance its transactivation activity. Interacts with SLC30A9 and RAD54L2/ARIP4. Interacts with MACROD1 (via macro domain). Interacts via the ligand-binding domain with LXXLL and FXXLF motifs from NCOA1, NCOA2, NCOA3 and MAGEA11. Interacts (via nuclear receptor DNA binding domain and nuclear receptor ligand binding domain) with NCOA4. The AR N-terminal poly-Gln region binds Ran resulting in enhancement of AR-mediated transactivation. Ran-binding decreases as the poly-Gln length increases. Interacts with HIP1 (via coiled coil domain). Interacts (via ligand-binding domain) with TRIM68. Interacts with TNK2. Interacts with USP26. Interacts with RNF6. Interacts (regulated by RNF6 probably through polyubiquitination) with RNF14; regulates AR transcriptional activity. Interacts with PRMT2 and TRIM24. Interacts with RACK1. Interacts with RANBP10; this interaction enhances dihydrotestosterone-induced AR transcriptional activity. Interacts with PRPF6 in a hormone-independent way; this interaction enhances dihydrotestosterone-induced AR transcriptional activity. Interacts with STK4/MST1. Interacts with ZIPK/DAPK3. Interacts with LPXN. Interacts with MAK. Part of a complex containing AR, MAK and NCOA3. Interacts with CRY1. Interacts with CCAR1 and GATA2. Interacts with ZNF318. Interacts with BUD31. Interacts with ARID4A. Interacts with ARID4B. Interacts (via NR LBD domain) with ZBTB7A; the interaction is direct and androgen-dependent. Interacts with NCOR1. Interacts with NCOR2. Interacts with CRY2 in a ligand-dependent manner. Phosphorylated in prostate cancer cells in response to several growth factors including EGF. Phosphorylation is induced by c-Src kinase (CSK). Tyr-526 is one of the major phosphorylation sites and an increase in phosphorylation and Src kinase activity is associated with prostate cancer progression. Phosphorylation by TNK2 enhances the DNA-binding and transcriptional activity. Phosphorylation at Ser-81 by CDK9 regulates AR promoter selectivity and cell growth. Post-translationally, sumoylated on Lys-385 (major) and Lys-512. Ubiquitinated. Deubiquitinated by USP26. 'Lys-6' and 'Lys-27'-linked polyubiquitination by RNF6 modulates AR transcriptional activity and specificity. In terms of processing, palmitoylated by ZDHHC7 and ZDHHC21. Palmitoylation is required for plasma membrane targeting and for rapid intracellular signaling via ERK and AKT kinases and cAMP generation.

The protein resides in the nucleus. The protein localises to the cytoplasm. In terms of biological role, steroid hormone receptors are ligand-activated transcription factors that regulate eukaryotic gene expression and affect cellular proliferation and differentiation in target tissues. Transcription factor activity is modulated by bound coactivator and corepressor proteins like ZBTB7A that recruits NCOR1 and NCOR2 to the androgen response elements/ARE on target genes, negatively regulating androgen receptor signaling and androgen-induced cell proliferation. Transcription activation is also down-regulated by NR0B2. Activated, but not phosphorylated, by HIPK3 and ZIPK/DAPK3. The polypeptide is Androgen receptor (AR) (Pan troglodytes (Chimpanzee)).